The primary structure comprises 151 residues: Large ribosomal subunit protein bL9 (151 aa).

The protein belongs to the bacterial ribosomal protein bL9 family.

Functionally, binds to the 23S rRNA. This Chlorobium phaeovibrioides (strain DSM 265 / 1930) (Prosthecochloris vibrioformis (strain DSM 265)) protein is Large ribosomal subunit protein bL9.